A 753-amino-acid chain; its full sequence is ATPase family gene 2 protein homolog B (753 aa).

At M1 the chain carries N-acetylmethionine. The required for interaction with AFG2A and CINP stretch occupies residues 1 to 189 (MAPDSDPFPE…PRTRVSLGGE (189 aa)). Residues 171 to 203 (SPDPAGLVTPRTRVSLGGEPPSEAQPQPEVPLG) are disordered. ATP is bound by residues 241–248 (GPPGVGKT) and 505–512 (GPPGCAKT).

This sequence belongs to the AAA ATPase family. AFG2 subfamily. Part of the 55LCC heterohexameric ATPase complex composed at least of AIRIM, AFG2A, AFG2B and CINP. Associates with pre-60S ribosomal particles. As to expression, expressed in both neurons and glia during embryonic and adult stages of brain development.

The protein localises to the cytoplasm. Its subcellular location is the cytoskeleton. The protein resides in the spindle. It localises to the nucleus. The enzyme catalyses ATP + H2O = ADP + phosphate + H(+). In the context of 55LCC heterohexameric ATPase complex, the ATPase activity is stimulated by DNA binding and inhibited in presence of RNA. ATP-dependent chaperone part of the 55LCC heterohexameric ATPase complex which is chromatin-associated and promotes replisome proteostasis to maintain replication fork progression and genome stability. Required for replication fork progression, sister chromatid cohesion, and chromosome stability. The ATPase activity is specifically enhanced by replication fork DNA and is coupled to cysteine protease-dependent cleavage of replisome substrates in response to replication fork damage. Uses ATPase activity to process replisome substrates in S-phase, facilitating their proteolytic turnover from chromatin to ensure DNA replication and mitotic fidelity. Plays an essential role in the cytoplasmic maturation steps of pre-60S ribosomal particles by promoting the release of shuttling protein RSL24D1/RLP24 from the pre-ribosomal particles. This chain is ATPase family gene 2 protein homolog B, found in Homo sapiens (Human).